The chain runs to 803 residues: MAKRSSLYIRIVEGKNLPAKDITGSSDPYCIVKVDNEPIIRTATVWKTLCPFWGEEYQVHLPPTFHAVAFYVMDEDALSRDDVIGKVCLTRDTIASHPKGFSGWAHLTEVDPDEEVQGEIHLRLEVWPGARACRLRCSVLEARDLAPKDRNGTSDPFVRVRYKGRTRETSIVKKSCYPRWNETFEFELQEGAMEALCVEAWDWDLVSRNDFLGKVVIDVQRLRVVQQEEGWFRLQPDQSKSRRHDEGNLGSLQLEVRLRDETVLPSSYYQPLVHLLCHEVKLGMQGPGQLIPLIEETTSTECRQDVATNLLKLFLGQGLAKDFLDLLFQLELSRTSETNTLFRSNSLASKSVESFLKVAGMQYLHGVLGPIINKVFEEKKYVELDPSKVEVKDVGCSGLHRPQTEAEVLEQSAQTLRAHLGALLSALSRSVRACPAVVRATFRQLFRRVRERFPGAQHENVPFIAVTSFLCLRFFSPAIMSPKLFHLRERHADARTSRTLLLLAKAVQNVGNMDTPASRAKEAWMEPLQPTVHQGVAQLKDFITKLVDIEEKDELDLQRTLSLQAPPVKEGPLFIHRTKGKGPLMSSSFKKLYFSLTTEALSFAKTPSSKKSALIKLANIRAAEKVEEKSFGGSHVMQVIYTDDAGRPQTAYLQCKCVNELNQWLSALRKVSINNTGLLGSYHPGVFRGDKWSCCHQKEKTGQGCDKTRSRVTLQEWNDPLDHDLEAQLIYRHLLGVEAMLWERHRELSGGAEAGTVPTSPGKVPEDSLARLLRVLQDLREAHSSSPAGSPPSEPNCLLELQT.

2 C2 domains span residues 1 to 105 and 116 to 232; these read MAKR…SGWA and VQGE…EGWF. Ca(2+) contacts are provided by D21, D27, D74, D76, S79, D82, D149, D155, D202, D204, S207, and D210. In terms of domain architecture, Ras-GAP spans 318–546; sequence GLAKDFLDLL…AQLKDFITKL (229 aa). In terms of domain architecture, PH spans 566–673; it reads PPVKEGPLFI…WLSALRKVSI (108 aa). Residues 675-711 form a Btk-type zinc finger; that stretch reads NTGLLGSYHPGVFRGDKWSCCHQKEKTGQGCDKTRSR. Residues H683, C694, C695, and C705 each coordinate Zn(2+). The segment at 781-803 is disordered; the sequence is EAHSSSPAGSPPSEPNCLLELQT.

Ca(2+) is required as a cofactor.

It is found in the cytoplasm. The protein localises to the cytosol. Its subcellular location is the cell membrane. In terms of biological role, ca(2+)-dependent Ras GTPase-activating protein, that may play a role in the Ras-MAPK pathway. This is Ras GTPase-activating protein 4B (RASA4B) from Homo sapiens (Human).